Here is a 547-residue protein sequence, read N- to C-terminus: Apolipoprotein N-acyltransferase (547 aa).

The next 6 membrane-spanning stretches (helical) occupy residues 31-51 (PLPA…AAHA), 65-85 (GWLF…VSMH), 89-109 (GLAA…LALF), 144-164 (AACW…FPWL), 181-201 (LLGV…LAGL), and 215-235 (LAAG…QFSW). The region spanning 248–511 (VQGNVEQSQK…AGVLPVAVQG (264 aa)) is the CN hydrolase domain. The active-site Proton acceptor is the Glu-292. Lys-366 is a catalytic residue. Cys-416 (nucleophile) is an active-site residue.

The protein belongs to the CN hydrolase family. Apolipoprotein N-acyltransferase subfamily.

The protein localises to the cell inner membrane. The catalysed reaction is N-terminal S-1,2-diacyl-sn-glyceryl-L-cysteinyl-[lipoprotein] + a glycerophospholipid = N-acyl-S-1,2-diacyl-sn-glyceryl-L-cysteinyl-[lipoprotein] + a 2-acyl-sn-glycero-3-phospholipid + H(+). The protein operates within protein modification; lipoprotein biosynthesis (N-acyl transfer). In terms of biological role, catalyzes the phospholipid dependent N-acylation of the N-terminal cysteine of apolipoprotein, the last step in lipoprotein maturation. The protein is Apolipoprotein N-acyltransferase of Bordetella bronchiseptica (strain ATCC BAA-588 / NCTC 13252 / RB50) (Alcaligenes bronchisepticus).